The sequence spans 260 residues: Zinc import ATP-binding protein ZnuC (260 aa).

Positions 14 to 229 constitute an ABC transporter domain; sequence LTARNLCADR…PEFARLFGDQ (216 aa). 46–53 serves as a coordination point for ATP; that stretch reads GPNGAGKS.

Belongs to the ABC transporter superfamily. Zinc importer (TC 3.A.1.15.5) family. As to quaternary structure, the complex is composed of two ATP-binding proteins (ZnuC), two transmembrane proteins (ZnuB) and a solute-binding protein (ZnuA).

The protein resides in the cell inner membrane. The enzyme catalyses Zn(2+)(out) + ATP(in) + H2O(in) = Zn(2+)(in) + ADP(in) + phosphate(in) + H(+)(in). Part of the ABC transporter complex ZnuABC involved in zinc import. Responsible for energy coupling to the transport system. In Magnetococcus marinus (strain ATCC BAA-1437 / JCM 17883 / MC-1), this protein is Zinc import ATP-binding protein ZnuC.